Here is a 509-residue protein sequence, read N- to C-terminus: Cation transporter HKT2;4 (509 aa).

Topologically, residues 1 to 32 (MPIRLHIFVSSARHAINSSALICRFIAFHLSP) are cytoplasmic. Transmembrane regions (helical) follow at residues 33–53 (LLIHLSYFLIIDVLGFVALVV) and 96–116 (VLTLLMFLGSEMFLSFLGLVL). The Cytoplasmic portion of the chain corresponds to 117–164 (ESSKQNKHDPENRRVSSVTVCEQSHLEEAIPQTPSMNSTDIKRSCHKY). Helical transmembrane passes span 165-185 (LVFVVLAYMIIILVTGSLLVF) and 237-257 (GLLLLLIGQILAGSTLLPMFL). Over 258–296 (RLVIWALRGLRLAKAEEPDFMMNNSSSVGFSHLLPNLQT) the chain is Cytoplasmic. 2 helical membrane passes run 297 to 317 (IFLAAVEVAFVGMTVILFCCL) and 353 to 373 (CSLVAPAALVLFMVMMYTPSL). Topologically, residues 374–400 (TKLFSACQDHKQIGPESDDRTSKGKPF) are cytoplasmic. Transmembrane regions (helical) follow at residues 401–421 (LKTMAFSPLAFNTTVIMLVCI) and 476–496 (SFSGWWSEPGKLILVLAMLYG). Topologically, residues 497 to 509 (RLNSKDSTSARTR) are cytoplasmic.

The protein belongs to the TrkH potassium transport family. HKT (TC 2.A.38.3) subfamily. Expressed in spikelets, leaf blades, leaf sheaths, internodes, nodes, the base of stems and roots.

The protein resides in the cell membrane. It carries out the reaction K(+)(in) = K(+)(out). The enzyme catalyses Mg(2+)(in) = Mg(2+)(out). It catalyses the reaction Ca(2+)(in) = Ca(2+)(out). High-affinity potassium transporter that does not show potassium-sodium cotransport. Potassium transport seems to be independent of sodium. Mediates transport of the divalent cations magnesium and calcium in the absence of competing potassium ions. Selectivity for potassium is dominant over divalent cations, and magnesium and calcium transport may be small and may depend on competing potassium concentrations. This chain is Cation transporter HKT2;4, found in Oryza sativa subsp. japonica (Rice).